The chain runs to 349 residues: Protein pelota homolog (349 aa).

The protein belongs to the eukaryotic release factor 1 family. Pelota subfamily. As to quaternary structure, monomer. A divalent metal cation serves as cofactor.

The protein localises to the cytoplasm. Its function is as follows. May function in recognizing stalled ribosomes, interact with stem-loop structures in stalled mRNA molecules, and effect endonucleolytic cleavage of the mRNA. May play a role in the release non-functional ribosomes and degradation of damaged mRNAs. Has endoribonuclease activity. The chain is Protein pelota homolog from Nitrosopumilus maritimus (strain SCM1).